The primary structure comprises 221 residues: Coiled-coil domain-containing protein 70 (221 aa).

A coiled-coil region spans residues 129 to 168; that stretch reads NALWEKDRNLLQEDKALWEEEKALWVEERALLEEEKALWE.

The sequence is that of Coiled-coil domain-containing protein 70 (CCDC70) from Macaca fascicularis (Crab-eating macaque).